Consider the following 501-residue polypeptide: MFEFGSIIVTVIAVFITIPICLYLFLTRHFNFWKKRGVIYVRPLPFFGNLKDVLLQKKYIGYYLKDIYEENINKPYVGIFAFDQPALLVNDLEIVKNILVKDSRNFIDRMVKVDESLSPLNANAIFALRGQKWKHVRTSLTPTFTTGKMKNMFYLVDKCGQQLVLFIEKFAKAENPVAVKDAVERFTMDVTAMCAFGIECNSLQDPKAEFSNLLHRIFQLSFTSAVANLATFFAPWVQNFFRLKLMDSEIEDRIRDIVWRAVHLREKTGEKRNDLLDYLMELRTSETSKLDGDDFVAQAFGFLVAGFHTSSMTLTFALYELSVHQDIQTTARTEIKDVLEHHKKKVTYYSIKDMKYLDMVVNETLRKYPAIPFLDRRCQEDYPLTQDLMLPAGTGVYIPVYALHHDSKYFPSPAKFDPERFSEKNKQNIPHFAYMPFGEGPRNCIGMRFGSMQVKAALIHILSNFEVSPCKETRIPLIIDPKPFNLMALGGVYLNITKFNN.

Cys444 contacts heme.

This sequence belongs to the cytochrome P450 family. It depends on heme as a cofactor.

The protein localises to the endoplasmic reticulum membrane. Its subcellular location is the microsome membrane. The polypeptide is Cytochrome P450 6j1 (CYP6J1) (Blattella germanica (German cockroach)).